Reading from the N-terminus, the 38-residue chain is Kappa-actitoxin-Bcs3a (38 aa).

Residues 2-37 (CIDRFPTGTCKHVKKGGSCKNSQKYRINCAKTCGLC) enclose the ShKT domain. Disulfide bonds link Cys-2–Cys-37, Cys-11–Cys-30, and Cys-20–Cys-34. The crucial for binding to potassium channels stretch occupies residues 25-26 (KY).

Belongs to the sea anemone type 1 potassium channel toxin family. Type 1b subfamily.

It is found in the secreted. Its subcellular location is the nematocyst. Its function is as follows. Inhibits voltage-gated potassium channels (IC(50)=405.0 nM for rKCNA1/Kv1.1, IC(50)=0.03 nM for rKCNA2/Kv1.2, IC(50)=1.31 nM for rKCNA6/Kv1.6, IC(50)=74.11 nM for hKCNA3/Kv1.3, and IC(50)=247.69 nM for insect Shaker IR). Binds the Shaker IR channels in a voltage-independent manner. This is Kappa-actitoxin-Bcs3a from Bunodosoma caissarum (Sea anemone).